The chain runs to 306 residues: uncharacterized protein (306 aa).

Topologically, residues 1 to 6 (MRFRQL) are cytoplasmic. Residues 7–27 (LPLFGALFALYIIWGSTYFVI) traverse the membrane as a helical segment. In terms of domain architecture, EamA 1 spans 18–141 (IIWGSTYFVI…GLAGIIMLNS (124 aa)). Residues 28–36 (RIGVESWPP) are Periplasmic-facing. A helical transmembrane segment spans residues 37-57 (LMMAGVRFLAAGILLLAFLLL). At 58–67 (RGHKLPPLRP) the chain is on the cytoplasmic side. A helical membrane pass occupies residues 68 to 88 (LLNAALIGLLLLAVGNGMVTV). The Periplasmic segment spans residues 89-93 (AEHQN). A helical membrane pass occupies residues 94–114 (VPSGIAAVVVATVPLFTLCFS). Topologically, residues 115–125 (RLFGIKTRKLE) are cytoplasmic. Residues 126-146 (WVGIAIGLAGIIMLNSGGNLS) form a helical membrane-spanning segment. The Periplasmic segment spans residues 147–148 (GN). Residues 149–169 (PWGAILILIGSISWAFGSVYG) traverse the membrane as a helical segment. An EamA 2 domain is found at 160 to 285 (ISWAFGSVYG…IVFAVVLVTL (126 aa)). The Cytoplasmic segment spans residues 170–173 (SRIT). A helical membrane pass occupies residues 174–194 (LPVGMMAGAIEMLAAGVVLMI). Over 195 to 206 (ASMIAGEKLTAL) the chain is Periplasmic. A helical membrane pass occupies residues 207–227 (PSLSGFLAVGYLALFGSIIAI). Residues 228 to 239 (NAYMYLIRNVSP) lie on the Cytoplasmic side of the membrane. Residues 240-260 (ALATSYAYVNPVVAVLLGTGL) traverse the membrane as a helical segment. The Periplasmic segment spans residues 261–269 (GGETLSKIE). Residues 270–290 (WLALGVIVFAVVLVTLGKYLF) traverse the membrane as a helical segment. The Cytoplasmic segment spans residues 291 to 306 (PAKPVVAPVIQDASSE).

The protein belongs to the EamA transporter family.

The protein resides in the cell inner membrane. This is an uncharacterized protein from Escherichia coli O157:H7.